The following is a 256-amino-acid chain: Small ribosomal subunit protein eS1 (256 aa).

A compositionally biased stretch (basic residues) spans Met1 to Lys18. The interval Met1–Val21 is disordered. Ala2 is modified (N-acetylalanine; partial).

This sequence belongs to the eukaryotic ribosomal protein eS1 family. Component of the small ribosomal subunit. Mature ribosomes consist of a small (40S) and a large (60S) subunit. The 40S subunit contains about 33 different proteins and 1 molecule of RNA (18S). The 60S subunit contains about 49 different proteins and 3 molecules of RNA (25S, 5.8S and 5S).

The protein localises to the cytoplasm. The chain is Small ribosomal subunit protein eS1 (rps1) from Neosartorya fischeri (strain ATCC 1020 / DSM 3700 / CBS 544.65 / FGSC A1164 / JCM 1740 / NRRL 181 / WB 181) (Aspergillus fischerianus).